Consider the following 477-residue polypeptide: Glutamate--tRNA ligase 2 (477 aa).

Residues 9–19 (PSPTGFLHIGG) carry the 'HIGH' region motif. The 'KMSKS' region signature appears at 238–242 (KLSKR). ATP is bound at residue Lys241.

It belongs to the class-I aminoacyl-tRNA synthetase family. Glutamate--tRNA ligase type 1 subfamily. In terms of assembly, monomer.

The protein resides in the cytoplasm. It carries out the reaction tRNA(Glu) + L-glutamate + ATP = L-glutamyl-tRNA(Glu) + AMP + diphosphate. Its function is as follows. Catalyzes the attachment of glutamate to tRNA(Glu) in a two-step reaction: glutamate is first activated by ATP to form Glu-AMP and then transferred to the acceptor end of tRNA(Glu). In Paramagnetospirillum magneticum (strain ATCC 700264 / AMB-1) (Magnetospirillum magneticum), this protein is Glutamate--tRNA ligase 2.